The following is a 391-amino-acid chain: uncharacterized protein (391 aa).

The protein belongs to the mycobacterial PPE family.

This is an uncharacterized protein from Mycobacterium tuberculosis (strain CDC 1551 / Oshkosh).